The primary structure comprises 505 residues: Peroxisome proliferator-activated receptor gamma (505 aa).

The O-linked (GlcNAc) threonine glycan is linked to T84. The residue at position 112 (S112) is a Phosphoserine. The nuclear receptor DNA-binding region spans 136 to 210 (AIECRVCGDK…VGMSHNAIRF (75 aa)). 2 consecutive NR C4-type zinc fingers follow at residues 139–159 (CRVC…CEGC) and 176–198 (CDLN…FQKC). The tract at residues 205–280 (HNAIRFGRMP…DKSPFVIYDM (76 aa)) is interaction with FAM120B. An NR LBD domain is found at 238–503 (DLRALAKHLY…HPLLQEIYKD (266 aa)). K252 is covalently cross-linked (Glycyl lysine isopeptide (Lys-Gly) (interchain with G-Cter in ubiquitin)). Residues 314–317 (QFRS), H351, H477, and Y501 contribute to the rosiglitazone site. Positions 495-503 (PLLQEIYKD) match the 9aaTAD motif.

It belongs to the nuclear hormone receptor family. NR1 subfamily. In terms of assembly, interacts with FOXO1 (acetylated form). Heterodimer with other nuclear receptors, such as RXRA. The heterodimer with the retinoic acid receptor RXRA is called adipocyte-specific transcription factor ARF6. Interacts with NCOA6 coactivator, leading to a strong increase in transcription of target genes. Interacts with coactivator PPARBP, leading to a mild increase in transcription of target genes. Interacts with NOCA7 in a ligand-inducible manner. Interacts with NCOA1 and NCOA2 LXXLL motifs. Interacts with ASXL1, ASXL2, DNTTIP2, FAM120B, MAP2K1/MEK1, NR0B2, PDPK1, PRDM16, PRMT2 and TGFB1I1. Interacts (when activated by agonist) with PPP5C. Interacts with HELZ2 and THRAP3; the interaction stimulates the transcriptional activity of PPARG. Interacts with PER2, the interaction is ligand dependent and blocks PPARG recruitment to target promoters. Interacts with NOCT. Interacts with ACTN4. Interacts (when in the liganded conformation) with GPS2. Interacts with CRY1 and CRY2 in a ligand-dependent manner. In the absence of hormonal ligand, interacts with TACC1. In macrophages, interacts with PAQR3 and STUB1; the interactions promote PPARG poylubiquitination and STUB1-mediated degradation. O-GlcNAcylation at Thr-84 reduces transcriptional activity in adipocytes. In terms of processing, phosphorylated in basal conditions and dephosphorylated when treated with the ligand. May be dephosphorylated by PPP5C. The phosphorylated form may be inactive and dephosphorylation at Ser-112 induces adipogenic activity. Post-translationally, ubiquitinated by E3 ubiquitin-protein ligase complex containing FBXO9; leading to proteasomal degradation. Ubiquitinated at Lys-252 by TRIM55 leading to proteasomal degradation. Ubiquitinated by E3 ubiquitin-protein ligase STUB1/CHIP; leading to proteasomal degradation. Highest expression in adipose tissue. Lower in skeletal muscle, spleen, heart and liver. Also detectable in placenta, lung and ovary.

It is found in the nucleus. The protein resides in the cytoplasm. Its activity is regulated as follows. PDPK1 activates its transcriptional activity independently of its kinase activity. In terms of biological role, nuclear receptor that binds peroxisome proliferators such as hypolipidemic drugs and fatty acids. Once activated by a ligand, the nuclear receptor binds to DNA specific PPAR response elements (PPRE) and modulates the transcription of its target genes, such as acyl-CoA oxidase. It therefore controls the peroxisomal beta-oxidation pathway of fatty acids. Key regulator of adipocyte differentiation and glucose homeostasis. ARF6 acts as a key regulator of the tissue-specific adipocyte P2 (aP2) enhancer. Acts as a critical regulator of gut homeostasis by suppressing NF-kappa-B-mediated pro-inflammatory responses. Plays a role in the regulation of cardiovascular circadian rhythms by regulating the transcription of BMAL1 in the blood vessels. Its function is as follows. (Microbial infection) Upon treatment with M.tuberculosis or its lipoprotein LpqH, phosphorylation of MAPK p38 and IL-6 production are modulated, probably via this protein. In Homo sapiens (Human), this protein is Peroxisome proliferator-activated receptor gamma (PPARG).